We begin with the raw amino-acid sequence, 628 residues long: Junctophilin-4 (628 aa).

The Cytoplasmic segment spans residues 1 to 606 (MSPGGKFDFD…RPAQPGAANP (606 aa)). MORN repeat units lie at residues 50 to 72 (LGVF…KREG), 74 to 95 (GVER…KGRS), 96 to 117 (GVWE…FQDG), 118 to 140 (YGTE…KRHG), 141 to 163 (YGVR…RTSL), and 164 to 186 (DSGH…EGGS). 2 disordered regions span residues 158-214 (PRRT…RTPA) and 231-276 (GGRR…LIEG). The span at 170-179 (PPTPPPPLPL) shows a compositional bias: pro residues. Low complexity-rich tracts occupy residues 231-241 (GGRRSSLGSKR) and 253-272 (GSTG…APPA). 2 MORN repeats span residues 317–339 (YGRT…RLVH) and 340–362 (GGRV…KVDR). Residues 415–602 (DLQPMLEAPG…AATERPAQPG (188 aa)) are disordered. The segment covering 432–443 (EGSDTEPLDEDS) has biased composition (acidic residues). Composition is skewed to low complexity over residues 453-467 (PSEG…PASS) and 528-541 (GSPL…SSGS). Residues 607–628 (LVVGAVALLDLSLAFLFSQLLT) form a helical; Anchor for type IV membrane protein membrane-spanning segment.

The protein belongs to the junctophilin family.

Its subcellular location is the cell membrane. It localises to the endoplasmic reticulum membrane. Junctophilins contribute to the formation of junctional membrane complexes (JMCs) which link the plasma membrane with the endoplasmic or sarcoplasmic reticulum in excitable cells. Provides a structural foundation for functional cross-talk between the cell surface and intracellular calcium release channels. JPH4 is brain-specific and appears to have an active role in certain neurons involved in motor coordination and memory. This is Junctophilin-4 (JPH4) from Homo sapiens (Human).